Consider the following 54-residue polypeptide: uncharacterized protein (54 aa).

It to B.subtilis XkdX.

This is an uncharacterized protein from Bacillus subtilis (strain 168).